The sequence spans 314 residues: Nerylneryl diphosphate synthase CPT2, chloroplastic (314 aa).

The N-terminal 61 residues, 1–61, are a transit peptide targeting the chloroplast; it reads MNSSIVSQHF…MSDRGLSKIS (61 aa). Asp-97 is an active-site residue.

Belongs to the UPP synthase family. It depends on Mg(2+) as a cofactor. Expressed in stems. Expressed in petiolules. Expressed at low levels in leaf trichomes, old leaf and roots.

The protein localises to the plastid. It is found in the chloroplast. It catalyses the reaction 3 isopentenyl diphosphate + dimethylallyl diphosphate = nerylneryl diphosphate + 3 diphosphate. The catalysed reaction is isopentenyl diphosphate + dimethylallyl diphosphate = neryl diphosphate + diphosphate. It carries out the reaction neryl diphosphate + isopentenyl diphosphate = (2Z,6Z)-farnesyl diphosphate + diphosphate. The enzyme catalyses (2Z,6Z)-farnesyl diphosphate + isopentenyl diphosphate = nerylneryl diphosphate + diphosphate. Uses dimethylallyl diphosphate and isopentenyl diphosphate to catalyze the cis-prenyl chain elongation and produce the 20 carbon product nerylneryl diphosphate. This chain is Nerylneryl diphosphate synthase CPT2, chloroplastic, found in Solanum lycopersicum (Tomato).